Here is a 96-residue protein sequence, read N- to C-terminus: MSAVIMQQGDLLLNLYIQPKASRDQIVGLHGDELKVAITAPPIDGKANAHLSKYLAKAFKVPKSDVHILKGELGRHKQVRISAPKNVPAEIATLLE.

Belongs to the UPF0235 family.

The polypeptide is UPF0235 protein Shewmr4_1190 (Shewanella sp. (strain MR-4)).